The sequence spans 337 residues: Histidine N-acetyltransferase (337 aa).

A propeptide spans M1–K2 (removed in mature form). Positions L21–E157 constitute an N-acetyltransferase domain.

Expressed exclusively in the brain and lens.

The enzyme catalyses L-histidine + acetyl-CoA = N(alpha)-acetyl-L-histidine + CoA + H(+). In terms of biological role, enzyme responsible for the N-acetyl-histidine (NAH) synthesis, which is a major constituent of brain and lens of ectothermic vertebrates. This Oreochromis niloticus (Nile tilapia) protein is Histidine N-acetyltransferase (hisat).